The sequence spans 159 residues: Ribonuclease H (159 aa).

Positions M1–R145 constitute an RNase H type-1 domain. D10, E49, D74, and D137 together coordinate Mg(2+).

Belongs to the RNase H family. As to quaternary structure, monomer. The cofactor is Mg(2+).

The protein localises to the cytoplasm. It carries out the reaction Endonucleolytic cleavage to 5'-phosphomonoester.. Endonuclease that specifically degrades the RNA of RNA-DNA hybrids. The sequence is that of Ribonuclease H from Thermosynechococcus vestitus (strain NIES-2133 / IAM M-273 / BP-1).